The following is a 561-amino-acid chain: MTIDFVTLLHQSDSLLLFVVLAFGLLLGKVRLGNFQIGNTIGVLFTALLFGQMGFEFTATTENVGFMLFIFCVGIEAGPHFFSVFLRDGIHYITLTLVILLTALLLTVGLAKFFNLGPGMAAGILAGSLTSTPALVGAQDALRSGLLNLPHKTDMQSVLDNMGIGYALTYLVGLVGLMLVVRYLPSLARLDLSTEAQKIARERGLSDNESRKTYLPIIRAYRVGPELAAWIGGRTLRETGIYPHTGCYVERIRRNGILASPDGDAVIQEGDEIALVGYPESHEKLDVNYRNGKEVFDRNLLDLQIVTEEIVVKNDGVVGRHLVELNLTEKGCFLNRVVRSQIEMPFDRNIMLQKGDVLQISGEKQRVKLLANKIGFISIHSQTTDLVAFTTFFVLGLLIGSVSLVFGQLEFGLGNAVGLLLAGILMGYLRANHPTVGYVPPGALRLAKDLGLAVFMVSTGLKAGGGILDHLSQVGAVVLFSGMLVTTLPVLVGYLFGVWVLKMNPALLLGAITGARTCAPAMDVVNEAANSSIPALGYAGTYAVANVMLTLAGSFIIGFWF.

5 helical membrane passes run 8 to 28 (LLHQ…LLLG), 37 to 57 (IGNT…GFEF), 66 to 86 (FMLF…SVFL), 90 to 110 (IHYI…TVGL), and 161 to 181 (NMGI…MLVV). 2 RCK C-terminal domains span residues 206 to 291 (SDNE…NYRN) and 293 to 376 (KEVF…KIGF). 5 helical membrane-spanning segments follow: residues 386-406 (LVAF…SLVF), 409-429 (LEFG…MGYL), 450-470 (LGLA…ILDH), 476-496 (AVVL…GYLF), and 541-561 (TYAV…GFWF).

This sequence belongs to the AAE transporter (TC 2.A.81) family. YbjL subfamily.

Its subcellular location is the cell membrane. This is Putative transport protein ASA_2308 from Aeromonas salmonicida (strain A449).